The sequence spans 156 residues: Cyanate hydratase (156 aa).

Residues arginine 96, glutamate 99, and serine 122 contribute to the active site.

This sequence belongs to the cyanase family.

It carries out the reaction cyanate + hydrogencarbonate + 3 H(+) = NH4(+) + 2 CO2. Catalyzes the reaction of cyanate with bicarbonate to produce ammonia and carbon dioxide. The polypeptide is Cyanate hydratase (Pseudomonas putida (strain W619)).